We begin with the raw amino-acid sequence, 253 residues long: HTH-type transcriptional regulator YdeO (253 aa).

The region spanning 137-233 is the HTH araC/xylS-type domain; that stretch reads GKVRNIVNMK…GNSPKRVSKE (97 aa). 2 DNA-binding regions (H-T-H motif) span residues 154-175 and 200-223; these read KDICDCLYISESLLKKKLKQEQ and VNKIAEQCGYASTSYFIYAFRKHF.

Functionally, induces the expression of gadE and mdtEF. Could also regulate the expression of other genes involved in acid resistance. This is HTH-type transcriptional regulator YdeO from Escherichia coli O157:H7.